A 298-amino-acid chain; its full sequence is Glutamyl-Q tRNA(Asp) synthetase (298 aa).

Residues 9 to 13 and glutamate 45 contribute to the L-glutamate site; that span reads RFAPS. The short motif at 12-22 is the 'HIGH' region element; that stretch reads PSPTGLLHAGS. Zn(2+) contacts are provided by cysteine 101, cysteine 103, tyrosine 121, and cysteine 125. L-glutamate contacts are provided by tyrosine 179 and arginine 197. A 'KMSKS' region motif is present at residues 235–239; that stretch reads KLSKQ. An ATP-binding site is contributed by lysine 238.

It belongs to the class-I aminoacyl-tRNA synthetase family. GluQ subfamily. Zn(2+) serves as cofactor.

Its function is as follows. Catalyzes the tRNA-independent activation of glutamate in presence of ATP and the subsequent transfer of glutamate onto a tRNA(Asp). Glutamate is transferred on the 2-amino-5-(4,5-dihydroxy-2-cyclopenten-1-yl) moiety of the queuosine in the wobble position of the QUC anticodon. This chain is Glutamyl-Q tRNA(Asp) synthetase, found in Chromobacterium violaceum (strain ATCC 12472 / DSM 30191 / JCM 1249 / CCUG 213 / NBRC 12614 / NCIMB 9131 / NCTC 9757 / MK).